The sequence spans 492 residues: Peptidyl-prolyl cis-trans isomerase-like 4 (492 aa).

In terms of domain architecture, PPIase cyclophilin-type spans 1–161 (MAVLLETTLG…QDIRINHTVI (161 aa)). The interval 167–188 (DDPPDLLIPDRSPEPTKEQLDS) is disordered. A compositionally biased stretch (basic and acidic residues) spans 177–187 (RSPEPTKEQLD). A Phosphoserine modification is found at S178. T182 is modified (phosphothreonine). Residues K201, K212, and K218 each participate in a glycyl lysine isopeptide (Lys-Gly) (interchain with G-Cter in SUMO2) cross-link. An RRM domain is found at 240–318 (NVLFVCKLNP…RRIHVDFSQS (79 aa)). Residues K321 and K362 each participate in a glycyl lysine isopeptide (Lys-Gly) (interchain with G-Cter in SUMO2) cross-link. Disordered regions lie at residues 368-409 (DEQG…NPNQ) and 423-492 (EESC…SKYR). Over residues 377-390 (SHSHTSKKHKKKTR) the composition is skewed to basic residues. S393 bears the Phosphoserine mark. K405 participates in a covalent cross-link: Glycyl lysine isopeptide (Lys-Gly) (interchain with G-Cter in SUMO2). Positions 426 to 436 (CWEKQKNEKRD) are enriched in basic and acidic residues. K460 is covalently cross-linked (Glycyl lysine isopeptide (Lys-Gly) (interchain with G-Cter in SUMO2)). S471 carries the post-translational modification Phosphoserine. A compositionally biased stretch (basic residues) spans 473–485 (KRDRSRSPKKSKA).

It belongs to the cyclophilin-type PPIase family. PPIL4 subfamily.

It localises to the nucleus. The catalysed reaction is [protein]-peptidylproline (omega=180) = [protein]-peptidylproline (omega=0). Its function is as follows. PPIases accelerate the folding of proteins. It catalyzes the cis-trans isomerization of proline imidic peptide bonds in oligopeptides. The polypeptide is Peptidyl-prolyl cis-trans isomerase-like 4 (Ppil4) (Mus musculus (Mouse)).